We begin with the raw amino-acid sequence, 385 residues long: Cell division protein FtsZ (385 aa).

Residues 37 to 41, 125 to 127, Glu156, Lys160, and Asp204 contribute to the GTP site; these read GGGSN and GTG.

This sequence belongs to the FtsZ family. In terms of assembly, homodimer. Polymerizes to form a dynamic ring structure in a strictly GTP-dependent manner. Interacts directly with several other division proteins.

Its subcellular location is the cytoplasm. Essential cell division protein that forms a contractile ring structure (Z ring) at the future cell division site. The regulation of the ring assembly controls the timing and the location of cell division. One of the functions of the FtsZ ring is to recruit other cell division proteins to the septum to produce a new cell wall between the dividing cells. Binds GTP and shows GTPase activity. The protein is Cell division protein FtsZ of Helicobacter pylori (strain ATCC 700392 / 26695) (Campylobacter pylori).